The following is a 714-amino-acid chain: Polyribonucleotide nucleotidyltransferase (714 aa).

Residues Asp-487 and Asp-493 each contribute to the Mg(2+) site. Residues 554-613 enclose the KH domain; the sequence is PRIETLKIPTDKIREVIGTGGKVIREIVEKTGAKINIEDDGTVKVASSDGNSIKAAIAWI. Residues 623-691 form the S1 motif domain; it reads GQIYEGTVVK…DRGKVRLSMR (69 aa).

The protein belongs to the polyribonucleotide nucleotidyltransferase family. Mg(2+) serves as cofactor.

The protein localises to the cytoplasm. The enzyme catalyses RNA(n+1) + phosphate = RNA(n) + a ribonucleoside 5'-diphosphate. Its function is as follows. Involved in mRNA degradation. Catalyzes the phosphorolysis of single-stranded polyribonucleotides processively in the 3'- to 5'-direction. The chain is Polyribonucleotide nucleotidyltransferase from Methylocella silvestris (strain DSM 15510 / CIP 108128 / LMG 27833 / NCIMB 13906 / BL2).